A 347-amino-acid polypeptide reads, in one-letter code: Ribosomal RNA large subunit methyltransferase M (347 aa).

S-adenosyl-L-methionine-binding positions include Ser184, 217 to 220 (APGG), Asp236, Asp256, and Asp272. Lys301 functions as the Proton acceptor in the catalytic mechanism.

Belongs to the class I-like SAM-binding methyltransferase superfamily. RNA methyltransferase RlmE family. RlmM subfamily. Monomer.

The protein resides in the cytoplasm. The catalysed reaction is cytidine(2498) in 23S rRNA + S-adenosyl-L-methionine = 2'-O-methylcytidine(2498) in 23S rRNA + S-adenosyl-L-homocysteine + H(+). Its function is as follows. Catalyzes the 2'-O-methylation at nucleotide C2498 in 23S rRNA. This Xanthomonas axonopodis pv. citri (strain 306) protein is Ribosomal RNA large subunit methyltransferase M.